We begin with the raw amino-acid sequence, 436 residues long: 3-ketoacyl-CoA thiolase (436 aa).

The active-site Acyl-thioester intermediate is the cysteine 99. Active-site proton acceptor residues include histidine 392 and cysteine 422.

Belongs to the thiolase-like superfamily. Thiolase family. Heterotetramer of two alpha chains (FadJ) and two beta chains (FadI).

The protein localises to the cytoplasm. The enzyme catalyses an acyl-CoA + acetyl-CoA = a 3-oxoacyl-CoA + CoA. It participates in lipid metabolism; fatty acid beta-oxidation. Its function is as follows. Catalyzes the final step of fatty acid oxidation in which acetyl-CoA is released and the CoA ester of a fatty acid two carbons shorter is formed. The protein is 3-ketoacyl-CoA thiolase of Alteromonas mediterranea (strain DSM 17117 / CIP 110805 / LMG 28347 / Deep ecotype).